The sequence spans 396 residues: Phosphoglycerate kinase (396 aa).

Residues 21–23 (DFN), arginine 37, 60–63 (HLGR), arginine 121, and arginine 154 each bind substrate. ATP-binding positions include lysine 205, glycine 296, glutamate 327, and 353–356 (GGDS).

Belongs to the phosphoglycerate kinase family. Monomer.

It localises to the cytoplasm. It carries out the reaction (2R)-3-phosphoglycerate + ATP = (2R)-3-phospho-glyceroyl phosphate + ADP. It participates in carbohydrate degradation; glycolysis; pyruvate from D-glyceraldehyde 3-phosphate: step 2/5. The polypeptide is Phosphoglycerate kinase (Anaeromyxobacter sp. (strain K)).